The following is a 216-amino-acid chain: Imidazole glycerol phosphate synthase subunit HisH (216 aa).

The region spanning 2–216 is the Glutamine amidotransferase type-1 domain; that stretch reads RVAIIDYGSG…LISNFLRWKP (215 aa). Cysteine 88 acts as the Nucleophile in catalysis. Residues histidine 196 and glutamate 198 contribute to the active site.

As to quaternary structure, heterodimer of HisH and HisF.

Its subcellular location is the cytoplasm. The enzyme catalyses 5-[(5-phospho-1-deoxy-D-ribulos-1-ylimino)methylamino]-1-(5-phospho-beta-D-ribosyl)imidazole-4-carboxamide + L-glutamine = D-erythro-1-(imidazol-4-yl)glycerol 3-phosphate + 5-amino-1-(5-phospho-beta-D-ribosyl)imidazole-4-carboxamide + L-glutamate + H(+). The catalysed reaction is L-glutamine + H2O = L-glutamate + NH4(+). It participates in amino-acid biosynthesis; L-histidine biosynthesis; L-histidine from 5-phospho-alpha-D-ribose 1-diphosphate: step 5/9. IGPS catalyzes the conversion of PRFAR and glutamine to IGP, AICAR and glutamate. The HisH subunit catalyzes the hydrolysis of glutamine to glutamate and ammonia as part of the synthesis of IGP and AICAR. The resulting ammonia molecule is channeled to the active site of HisF. The chain is Imidazole glycerol phosphate synthase subunit HisH from Rhizobium meliloti (strain 1021) (Ensifer meliloti).